We begin with the raw amino-acid sequence, 213 residues long: Regulatory protein RecX (213 aa).

It belongs to the RecX family.

The protein localises to the cytoplasm. Functionally, modulates RecA activity. The sequence is that of Regulatory protein RecX from Clostridium beijerinckii (strain ATCC 51743 / NCIMB 8052) (Clostridium acetobutylicum).